The chain runs to 559 residues: Dihydroxy-acid dehydratase (559 aa).

Asp-78 is a binding site for Mg(2+). Cys-119 serves as a coordination point for [2Fe-2S] cluster. Mg(2+)-binding residues include Asp-120 and Lys-121. Lys-121 is subject to N6-carboxylysine. Cys-192 lines the [2Fe-2S] cluster pocket. Glu-446 is a Mg(2+) binding site. Residue Ser-472 is the Proton acceptor of the active site.

Belongs to the IlvD/Edd family. Homodimer. The cofactor is [2Fe-2S] cluster. Mg(2+) is required as a cofactor.

The catalysed reaction is (2R)-2,3-dihydroxy-3-methylbutanoate = 3-methyl-2-oxobutanoate + H2O. It carries out the reaction (2R,3R)-2,3-dihydroxy-3-methylpentanoate = (S)-3-methyl-2-oxopentanoate + H2O. It participates in amino-acid biosynthesis; L-isoleucine biosynthesis; L-isoleucine from 2-oxobutanoate: step 3/4. It functions in the pathway amino-acid biosynthesis; L-valine biosynthesis; L-valine from pyruvate: step 3/4. Functions in the biosynthesis of branched-chain amino acids. Catalyzes the dehydration of (2R,3R)-2,3-dihydroxy-3-methylpentanoate (2,3-dihydroxy-3-methylvalerate) into 2-oxo-3-methylpentanoate (2-oxo-3-methylvalerate) and of (2R)-2,3-dihydroxy-3-methylbutanoate (2,3-dihydroxyisovalerate) into 2-oxo-3-methylbutanoate (2-oxoisovalerate), the penultimate precursor to L-isoleucine and L-valine, respectively. This chain is Dihydroxy-acid dehydratase, found in Wolinella succinogenes (strain ATCC 29543 / DSM 1740 / CCUG 13145 / JCM 31913 / LMG 7466 / NCTC 11488 / FDC 602W) (Vibrio succinogenes).